The primary structure comprises 367 residues: Glutamate 5-kinase (367 aa).

Lysine 10 contributes to the ATP binding site. Substrate contacts are provided by serine 50, aspartate 137, and asparagine 149. Residues 169 to 170 (TD) and 211 to 217 (TGGMGTK) each bind ATP. The region spanning 275–353 (AGEITVDDGA…QEISEILGYE (79 aa)) is the PUA domain.

The protein belongs to the glutamate 5-kinase family.

It localises to the cytoplasm. The catalysed reaction is L-glutamate + ATP = L-glutamyl 5-phosphate + ADP. It functions in the pathway amino-acid biosynthesis; L-proline biosynthesis; L-glutamate 5-semialdehyde from L-glutamate: step 1/2. Its activity is regulated as follows. Proline-mediated feedback inhibition. Catalyzes the transfer of a phosphate group to glutamate to form L-glutamate 5-phosphate. The sequence is that of Glutamate 5-kinase from Serratia marcescens.